Consider the following 457-residue polypeptide: Zinc finger protein ZPR1 (457 aa).

Residues 1 to 13 (MSTVSDPNSSNPP) show a composition bias toward polar residues. Positions 1 to 21 (MSTVSDPNSSNPPESAGNIRP) are disordered. 2 C4-type zinc fingers span residues 43–75 (CMNCFETGVTRLLPTKIPFFREVVLMSFKCDHC) and 261–293 (CPSCQAPCETNMKLTNIPHFKEVVIMATVCGAC). The interval 414-457 (VQSLSDDDSEPDDKLTVERYDRSYEDNEDLGLNDMKTEGYEEKA) is disordered. 2 stretches are compositionally biased toward basic and acidic residues: residues 425–438 (DDKLTVERYDRSYE) and 448–457 (MKTEGYEEKA).

It belongs to the ZPR1 family.

Its function is as follows. Might mediate EGFR and FGFR signal transduction cascades required for lumen formation in tracheal cells. This Drosophila melanogaster (Fruit fly) protein is Zinc finger protein ZPR1.